Here is a 2283-residue protein sequence, read N- to C-terminus: Serine-rich adhesin for platelets (2283 aa).

An N-terminal signal peptide occupies residues 1 to 89; it reads MSKRQKAFHD…VNMLHDQQAF (89 aa). Positions 90-230 are serine-rich repeat region 1, SRR1; that stretch reads AASDAPLTSE…KTSTTSTSTA (141 aa). Polar residues predominate over residues 100–111; sequence LNTQSETVGNQN. Disordered stretches follow at residues 100-230, 691-721, and 751-2255; these read LNTQ…TSTA, NSGN…GTPT, and NSMS…GLLG. The segment covering 112–128 has biased composition (low complexity); that stretch reads STTIEASTSTADSTSVT. Residues 129–140 show a composition bias toward polar residues; that stretch reads KNSSSVQTSNSD. A compositionally biased stretch (low complexity) spans 149-229; sequence NVTSTTNSTS…NKTSTTSTST (81 aa). The tract at residues 231 to 751 is non-repeat region (NRR); the sequence is PVKLRTFSRL…TTFKYEVTRN (521 aa). Low complexity-rich tracts occupy residues 752 to 1323, 1330 to 1894, and 1901 to 2225; these read SMSD…SDSI, SLSA…QSSS, and DSMS…SATS. The serine-rich repeat region 2, SRR2 stretch occupies residues 752–2244; the sequence is SMSDSVSTSG…AQSEERLPDT (1493 aa). The LPXTG sorting signal signature appears at 2241–2245; that stretch reads LPDTG. Threonine 2244 carries the pentaglycyl murein peptidoglycan amidated threonine modification. A propeptide spans 2245–2283 (removed by sortase); it reads GESIKQNGLLGGIMTLLVGLGLMKRKKKKDENDQDDSQA.

The protein belongs to the serine-rich repeat protein (SRRP) family. In terms of processing, proteolytically cleaved by a metalloprotease. Glycosylated. It is probable that most of the Ser residues in SSR1 and SSR2 are O-GlcNAcylated. Sequential glycosylation by sugar transferases are able to generate complex sugar polymorphisms.

It is found in the secreted. The protein resides in the cell wall. Functionally, mediates binding to human platelets, possibly through a receptor-ligand interaction. Probably associated with virulence in endovascular infection. This Staphylococcus aureus protein is Serine-rich adhesin for platelets (sraP).